A 385-amino-acid chain; its full sequence is GDSL esterase/lipase At5g08460 (385 aa).

The signal sequence occupies residues 1–35 (MHDSEIFKFKDMMMMSCTVQTLVLVPWFLVVFVLA). S56 functions as the Nucleophile in the catalytic mechanism. 2 N-linked (GlcNAc...) asparagine glycosylation sites follow: N218 and N285. Active-site residues include D350 and H353. 2 N-linked (GlcNAc...) asparagine glycosylation sites follow: N368 and N378.

Belongs to the 'GDSL' lipolytic enzyme family.

It is found in the secreted. The polypeptide is GDSL esterase/lipase At5g08460 (Arabidopsis thaliana (Mouse-ear cress)).